Reading from the N-terminus, the 272-residue chain is 3-methyl-2-oxobutanoate hydroxymethyltransferase (272 aa).

Residues Asp-43 and Asp-82 each contribute to the Mg(2+) site. Residues 43–44 (DS), Asp-82, and Lys-112 contribute to the 3-methyl-2-oxobutanoate site. Glu-114 is a binding site for Mg(2+). Residue Glu-179 is the Proton acceptor of the active site.

The protein belongs to the PanB family. As to quaternary structure, homodecamer; pentamer of dimers. The cofactor is Mg(2+).

It is found in the cytoplasm. The enzyme catalyses 3-methyl-2-oxobutanoate + (6R)-5,10-methylene-5,6,7,8-tetrahydrofolate + H2O = 2-dehydropantoate + (6S)-5,6,7,8-tetrahydrofolate. It participates in cofactor biosynthesis; (R)-pantothenate biosynthesis; (R)-pantoate from 3-methyl-2-oxobutanoate: step 1/2. Functionally, catalyzes the reversible reaction in which hydroxymethyl group from 5,10-methylenetetrahydrofolate is transferred onto alpha-ketoisovalerate to form ketopantoate. This chain is 3-methyl-2-oxobutanoate hydroxymethyltransferase, found in Staphylococcus aureus (strain MRSA252).